Here is a 282-residue protein sequence, read N- to C-terminus: MKLAVFTDSSAYLSAETLQREDLFVLDIPVNIDGEEYVEGINLSAEEFYQKMAQASELPKTSQPSIAKLDEILTSLKEQGYTHALGLFLSSGISGFYQSIQYMVDDYEGLTIAFPDTLITSAPLGIMVESVFNWRDQGDDFASIQDKLAIQISRTSAFIMVDDLDHLVKGGRLSNGAAILGNLLSIKPILYFNDQGVIEVYEKVRTEKKATKRLIEIIKETTASGQYRVIVIHGNAPEKAEELRQHLLDFGLGSDVSLATFGSVIGTHLGAGSIALGYIPVI.

In terms of domain architecture, DegV spans 3–280 (LAVFTDSSAY…AGSIALGYIP (278 aa)). The hexadecanoate site is built by threonine 61 and serine 94.

In terms of biological role, may bind long-chain fatty acids, such as palmitate, and may play a role in lipid transport or fatty acid metabolism. The protein is DegV domain-containing protein spr1415 of Streptococcus pneumoniae (strain ATCC BAA-255 / R6).